Consider the following 310-residue polypeptide: Olfactory receptor 5P55 (310 aa).

The Extracellular segment spans residues M1–V25. The N-linked (GlcNAc...) asparagine glycan is linked to N5. Residues I26–I46 traverse the membrane as a helical segment. Over S47 to Q54 the chain is Cytoplasmic. The chain crosses the membrane as a helical span at residues L55–T75. The Extracellular portion of the chain corresponds to S76–A99. A disulfide bridge connects residues C97 and C189. Residues Q100–Y120 traverse the membrane as a helical segment. Over D121–S133 the chain is Cytoplasmic. A helical transmembrane segment spans residues T134–V154. The Extracellular segment spans residues N155–G196. A helical transmembrane segment spans residues I197–S217. The Cytoplasmic portion of the chain corresponds to Y218–A237. The helical transmembrane segment at F238–I258 threads the bilayer. The Extracellular segment spans residues Y259–N271. A glycan (N-linked (GlcNAc...) asparagine) is linked at N265. Residues K272–L292 form a helical membrane-spanning segment. Over R293 to P310 the chain is Cytoplasmic.

The protein belongs to the G-protein coupled receptor 1 family.

Its subcellular location is the cell membrane. Potential odorant receptor. In Mus musculus (Mouse), this protein is Olfactory receptor 5P55.